Here is a 400-residue protein sequence, read N- to C-terminus: Serine/threonine transporter SstT (400 aa).

A run of 9 helical transmembrane segments spans residues 14–34 (IIIA…VTPY), 48–68 (SVAP…FQVG), 76–96 (VLLL…IASL), 136–156 (AISE…GLAM), 177–197 (IIHK…AVTF), 211–231 (LLVV…PILV), 285–305 (IPLG…VLTL), 311–331 (LGIH…TISA), and 349–371 (CSLF…IISV).

Belongs to the dicarboxylate/amino acid:cation symporter (DAACS) (TC 2.A.23) family.

It is found in the cell inner membrane. It carries out the reaction L-serine(in) + Na(+)(in) = L-serine(out) + Na(+)(out). The catalysed reaction is L-threonine(in) + Na(+)(in) = L-threonine(out) + Na(+)(out). Involved in the import of serine and threonine into the cell, with the concomitant import of sodium (symport system). This Acinetobacter baumannii (strain AB307-0294) protein is Serine/threonine transporter SstT.